The primary structure comprises 61 residues: Large ribosomal subunit protein bL28 (61 aa).

Positions M1–S27 are disordered. Positions K9–S27 are enriched in polar residues.

Belongs to the bacterial ribosomal protein bL28 family.

The polypeptide is Large ribosomal subunit protein bL28 (Lactobacillus delbrueckii subsp. bulgaricus (strain ATCC 11842 / DSM 20081 / BCRC 10696 / JCM 1002 / NBRC 13953 / NCIMB 11778 / NCTC 12712 / WDCM 00102 / Lb 14)).